The sequence spans 394 residues: Phosphoglycerate kinase (394 aa).

Substrate-binding positions include 21–23 (DFN), R36, 59–62 (HFGR), R118, and R151. ATP-binding positions include K201, E323, and 349 to 352 (GGDS).

It belongs to the phosphoglycerate kinase family. In terms of assembly, monomer.

It is found in the cytoplasm. It catalyses the reaction (2R)-3-phosphoglycerate + ATP = (2R)-3-phospho-glyceroyl phosphate + ADP. The protein operates within carbohydrate degradation; glycolysis; pyruvate from D-glyceraldehyde 3-phosphate: step 2/5. The polypeptide is Phosphoglycerate kinase (Brevibacillus brevis (strain 47 / JCM 6285 / NBRC 100599)).